We begin with the raw amino-acid sequence, 445 residues long: Exodeoxyribonuclease 7 large subunit (445 aa).

Belongs to the XseA family. Heterooligomer composed of large and small subunits.

It localises to the cytoplasm. It catalyses the reaction Exonucleolytic cleavage in either 5'- to 3'- or 3'- to 5'-direction to yield nucleoside 5'-phosphates.. Bidirectionally degrades single-stranded DNA into large acid-insoluble oligonucleotides, which are then degraded further into small acid-soluble oligonucleotides. The sequence is that of Exodeoxyribonuclease 7 large subunit from Staphylococcus saprophyticus subsp. saprophyticus (strain ATCC 15305 / DSM 20229 / NCIMB 8711 / NCTC 7292 / S-41).